A 647-amino-acid chain; its full sequence is UvrABC system protein C (647 aa).

Residues 26-106 enclose the GIY-YIG domain; the sequence is SEPGCYLMRD…IKEHQPYFNI (81 aa). The UVR domain occupies 216 to 251; it reads DQLKDLLHKQMLIQSKLQEFEKAAIIRDQIKGIEQL.

The protein belongs to the UvrC family. As to quaternary structure, interacts with UvrB in an incision complex.

It localises to the cytoplasm. The UvrABC repair system catalyzes the recognition and processing of DNA lesions. UvrC both incises the 5' and 3' sides of the lesion. The N-terminal half is responsible for the 3' incision and the C-terminal half is responsible for the 5' incision. This is UvrABC system protein C from Prochlorococcus marinus (strain MIT 9211).